The primary structure comprises 478 residues: Putative indole-3-acetic acid-amido synthetase GH3.10 (478 aa).

This sequence belongs to the IAA-amido conjugating enzyme family.

In terms of biological role, may catalyze the synthesis of indole-3-acetic acid (IAA)-amino acid conjugates, providing a mechanism for the plant to cope with the presence of excess auxin. This Oryza sativa subsp. japonica (Rice) protein is Putative indole-3-acetic acid-amido synthetase GH3.10 (GH3.10).